We begin with the raw amino-acid sequence, 461 residues long: Mannose-6-phosphate isomerase (461 aa).

Zn(2+) is bound by residues Q107, H109, E134, and H291. R310 is a catalytic residue.

Belongs to the mannose-6-phosphate isomerase type 1 family. It depends on Zn(2+) as a cofactor.

It localises to the cytoplasm. It catalyses the reaction D-mannose 6-phosphate = D-fructose 6-phosphate. Its pathway is nucleotide-sugar biosynthesis; GDP-alpha-D-mannose biosynthesis; alpha-D-mannose 1-phosphate from D-fructose 6-phosphate: step 1/2. Its function is as follows. Involved in the synthesis of the GDP-mannose and dolichol-phosphate-mannose required for a number of critical mannosyl transfer reactions. In Emericella nidulans (strain FGSC A4 / ATCC 38163 / CBS 112.46 / NRRL 194 / M139) (Aspergillus nidulans), this protein is Mannose-6-phosphate isomerase (manA).